A 77-amino-acid chain; its full sequence is Acyl carrier protein (77 aa).

A Carrier domain is found at 2–77 (ASIEKRIKEI…DAIDYITDHT (76 aa)). Residue Ser-37 is modified to O-(pantetheine 4'-phosphoryl)serine.

This sequence belongs to the acyl carrier protein (ACP) family. 4'-phosphopantetheine is transferred from CoA to a specific serine of apo-ACP by AcpS. This modification is essential for activity because fatty acids are bound in thioester linkage to the sulfhydryl of the prosthetic group.

It is found in the cytoplasm. The protein operates within lipid metabolism; fatty acid biosynthesis. Carrier of the growing fatty acid chain in fatty acid biosynthesis. The protein is Acyl carrier protein of Geobacter sp. (strain M21).